Here is a 207-residue protein sequence, read N- to C-terminus: Enolase (207 aa).

Gln162 contacts (2R)-2-phosphoglycerate. Glu204 serves as the catalytic Proton donor.

Belongs to the enolase family.

Its subcellular location is the cytoplasm. The protein resides in the secreted. It is found in the cell surface. The catalysed reaction is (2R)-2-phosphoglycerate = phosphoenolpyruvate + H2O. It participates in carbohydrate degradation; glycolysis; pyruvate from D-glyceraldehyde 3-phosphate: step 4/5. Its function is as follows. Catalyzes the reversible conversion of 2-phosphoglycerate (2-PG) into phosphoenolpyruvate (PEP). It is essential for the degradation of carbohydrates via glycolysis. The polypeptide is Enolase (Campylobacter fetus).